We begin with the raw amino-acid sequence, 90 residues long: Phaiodotoxin (90 aa).

Positions 1–18 (MKTIPLLFLLFIYFECDG) are cleaved as a signal peptide. Residues 19–90 (KFIRHKDESF…CFGALESKCA (72 aa)) enclose the LCN-type CS-alpha/beta domain. 4 disulfide bridges follow: Cys-31–Cys-56, Cys-41–Cys-68, Cys-45–Cys-70, and Cys-81–Cys-89.

In terms of tissue distribution, expressed by the venom gland.

The protein localises to the secreted. Sodium channel (Nav) specific neurotoxin. Causes impairment of movement and mild paralysis in crickets at a dose of 0.5 ug per animal. A dose of 0.8 ug per cricket causes clear flaccid paralysis. A dose of 1.0 ug per cricket causes death within 2 hours. Is not toxic to mice at a dose of 100 ug per 20 g mouse weight. This is Phaiodotoxin from Anuroctonus phaiodactylus (Mafia scorpion).